The chain runs to 107 residues: Replication initiation control protein YabA (107 aa).

Positions 81, 83, 97, and 100 each coordinate Zn(2+).

This sequence belongs to the YabA family. Homotetramer. Interacts with both DnaA and DnaN, acting as a bridge between these two proteins. The cofactor is Zn(2+).

The protein localises to the cytoplasm. It localises to the nucleoid. Functionally, involved in control of chromosome replication initiation. Inhibits the cooperative binding of DnaA to the oriC region, thus negatively regulating initiation of chromosome replication. Inhibits the ability of DnaA-ATP to form a helix on DNA; does not disassemble preformed DnaA-DNA helices. Decreases the residence time of DnaA on the chromosome at its binding sites (oriC, replication forks and promoter-binding sites). Tethers DnaA to the replication machinery via the DNA polymerase beta sliding clamp subunit (dnaN). Associates with oriC and other DnaA targets on the chromosome in a DnaA-dependent manner. This is Replication initiation control protein YabA from Streptococcus pyogenes serotype M1.